We begin with the raw amino-acid sequence, 70 residues long: DNA gyrase inhibitor YacG (70 aa).

Cysteine 21, cysteine 24, cysteine 36, and cysteine 40 together coordinate Zn(2+).

It belongs to the DNA gyrase inhibitor YacG family. As to quaternary structure, interacts with GyrB. It depends on Zn(2+) as a cofactor.

Inhibits all the catalytic activities of DNA gyrase by preventing its interaction with DNA. Acts by binding directly to the C-terminal domain of GyrB, which probably disrupts DNA binding by the gyrase. The chain is DNA gyrase inhibitor YacG from Sinorhizobium medicae (strain WSM419) (Ensifer medicae).